Here is a 415-residue protein sequence, read N- to C-terminus: MAAAAVTAVAGVTSGSSRKRLLREEDMTKVEFETSEEVDVTPTFDTMGLREDLLRGIYAYGFEKPSAIQQRAIKQIIKGRDVIAQSQSGTGKTATFCVSVLQCLDIQVRETQALILAPTRELAGQIQKVLLALGDYMNVQCHACIGGTNVGEDIRKLDYGQHVVAGTPGRVFDMIRRRSLRTRAIKMLVLDEADEMLNKGFKEQIYDVYRYLPPATQVCLISATLPHEILEMTNKFMTDPIRILVKRDELTLEGIKQFFVAVEREEWKFDTLCDLYDTLTITQAVIFCNTKRKVDWLTEKMREANFTVSSMHGDMPQKERESIMKEFRSGASRVLISTDVWARGLDVPQVSLIINYDLPNNRELYIHRIGRSGRYGRKGVAINFVKNDDIRILRDIEQYYSTQIDEMPMNVADLI.

The short motif at Pro-42–Gln-70 is the Q motif element. ATP-binding positions include Lys-64, Gln-69, Ser-86–Thr-93, and Gly-89–Ala-94. One can recognise a Helicase ATP-binding domain in the interval Ile-73 to Ile-243. The short motif at Asp-191 to Asp-194 is the DEAD box element. One can recognise a Helicase C-terminal domain in the interval Gly-254–Ile-415. Residues Asp-346 and Arg-371–Tyr-375 each bind ATP.

The protein belongs to the DEAD box helicase family. eIF4A subfamily. Identified in the spliceosome C complex. Part of the mRNA splicing-dependent exon junction complex (EJC) complex; the core complex contains casc3, eif4a3, magoh and rbm8a.

Its subcellular location is the nucleus. The protein localises to the nucleus speckle. The protein resides in the cytoplasm. It carries out the reaction ATP + H2O = ADP + phosphate + H(+). In terms of biological role, ATP-dependent RNA helicase. Involved in pre-mRNA splicing as component of the spliceosome. Core component of the splicing-dependent multiprotein exon junction complex (EJC) deposited at splice junctions on mRNAs. The EJC is a dynamic structure consisting of core proteins and several peripheral nuclear and cytoplasmic associated factors that join the complex only transiently either during EJC assembly or during subsequent mRNA metabolism. The EJC marks the position of the exon-exon junction in the mature mRNA for the gene expression machinery and the core components remain bound to spliced mRNAs throughout all stages of mRNA metabolism thereby influencing downstream processes including nuclear mRNA export, subcellular mRNA localization, translation efficiency and nonsense-mediated mRNA decay (NMD). Binds spliced mRNA in sequence-independent manner, 20-24 nucleotides upstream of mRNA exon-exon junctions. Involved in craniofacial development. This is Eukaryotic initiation factor 4A-III (eif4a3) from Xenopus tropicalis (Western clawed frog).